The sequence spans 229 residues: Uracil-DNA glycosylase (229 aa).

The Proton acceptor role is filled by Asp-72.

It belongs to the uracil-DNA glycosylase (UDG) superfamily. UNG family.

The protein localises to the cytoplasm. It carries out the reaction Hydrolyzes single-stranded DNA or mismatched double-stranded DNA and polynucleotides, releasing free uracil.. Its function is as follows. Excises uracil residues from the DNA which can arise as a result of misincorporation of dUMP residues by DNA polymerase or due to deamination of cytosine. In Dichelobacter nodosus (strain VCS1703A), this protein is Uracil-DNA glycosylase.